A 277-amino-acid polypeptide reads, in one-letter code: Pantothenate synthetase (277 aa).

26 to 33 (MGNLHEGH) is a binding site for ATP. His33 acts as the Proton donor in catalysis. Gln57 serves as a coordination point for (R)-pantoate. Position 57 (Gln57) interacts with beta-alanine. 144-147 (GKKD) lines the ATP pocket. Gln150 contacts (R)-pantoate. ATP contacts are provided by residues Val173 and 181-184 (LSSR).

The protein belongs to the pantothenate synthetase family. As to quaternary structure, homodimer.

It is found in the cytoplasm. The enzyme catalyses (R)-pantoate + beta-alanine + ATP = (R)-pantothenate + AMP + diphosphate + H(+). Its pathway is cofactor biosynthesis; (R)-pantothenate biosynthesis; (R)-pantothenate from (R)-pantoate and beta-alanine: step 1/1. Catalyzes the condensation of pantoate with beta-alanine in an ATP-dependent reaction via a pantoyl-adenylate intermediate. This chain is Pantothenate synthetase, found in Paraburkholderia phymatum (strain DSM 17167 / CIP 108236 / LMG 21445 / STM815) (Burkholderia phymatum).